Consider the following 289-residue polypeptide: Energy-coupling factor transporter ATP-binding protein EcfA2 (289 aa).

Positions 3-246 (IEIKDVEHRY…KDDIAALGLD (244 aa)) constitute an ABC transporter domain. 40 to 47 (GHTGSGKS) provides a ligand contact to ATP.

The protein belongs to the ABC transporter superfamily. Energy-coupling factor EcfA family. Forms a stable energy-coupling factor (ECF) transporter complex composed of 2 membrane-embedded substrate-binding proteins (S component), 2 ATP-binding proteins (A component) and 2 transmembrane proteins (T component).

The protein localises to the cell membrane. Its function is as follows. ATP-binding (A) component of a common energy-coupling factor (ECF) ABC-transporter complex. Unlike classic ABC transporters this ECF transporter provides the energy necessary to transport a number of different substrates. The polypeptide is Energy-coupling factor transporter ATP-binding protein EcfA2 (Bacillus licheniformis (strain ATCC 14580 / DSM 13 / JCM 2505 / CCUG 7422 / NBRC 12200 / NCIMB 9375 / NCTC 10341 / NRRL NRS-1264 / Gibson 46)).